A 259-amino-acid chain; its full sequence is Ribonuclease HII (259 aa).

The RNase H type-2 domain maps to 70-258 (TLIVGIDEVG…VKSLVLGKKE (189 aa)). A divalent metal cation contacts are provided by Asp-76, Glu-77, and Asp-168.

The protein belongs to the RNase HII family. Mn(2+) serves as cofactor. The cofactor is Mg(2+).

It is found in the cytoplasm. It catalyses the reaction Endonucleolytic cleavage to 5'-phosphomonoester.. Endonuclease that specifically degrades the RNA of RNA-DNA hybrids. This is Ribonuclease HII from Streptococcus pneumoniae serotype 2 (strain D39 / NCTC 7466).